The sequence spans 389 residues: Endo-chitosanase C (389 aa).

The N-terminal stretch at 1–22 (MPIKSFASRLALSLAICGTAMG) is a signal peptide. The R3-1 repeat unit spans residues 280 to 313 (CSWPGHCAGFKNKGATCSSNDDCSDDLACQNGKC). One copy of the R3-2 repeat lies at 320 to 350 (ETCSWEGHCKGATCSSNDDCSDELACISGIC). Residues 357-387 (ETCEWEGHCEGASCSSHDDCDGNLACKNGKC) form an R3-3 repeat.

It belongs to the glycosyl hydrolase 75 family.

It is found in the secreted. It carries out the reaction Endohydrolysis of beta-(1-&gt;4)-linkages between D-glucosamine residues in a partly acetylated chitosan.. Functionally, chitosanase catalyzing the endo-type cleavage of chitosan, the deacylated form of chitin. Chitosanase may be crucial in the degradation of the deacetylated portion of chitin in the fungal cell wall. Chitoolisaccharides produced by the hydrolysis of partially N-acetylated chitosan are known to have many biological activities, including antibacterial activity, immune-enhancing effects, and elicitor activity. This chain is Endo-chitosanase C (csnC), found in Aspergillus oryzae (strain ATCC 42149 / RIB 40) (Yellow koji mold).